Consider the following 58-residue polypeptide: Small ribosomal subunit protein bS21 (58 aa).

Belongs to the bacterial ribosomal protein bS21 family.

The chain is Small ribosomal subunit protein bS21 from Lacticaseibacillus paracasei (strain ATCC 334 / BCRC 17002 / CCUG 31169 / CIP 107868 / KCTC 3260 / NRRL B-441) (Lactobacillus paracasei).